The chain runs to 715 residues: Polyribonucleotide nucleotidyltransferase (715 aa).

Mg(2+)-binding residues include Asp493 and Asp499. Residues 560 to 619 form the KH domain; the sequence is PRMITVKINPEKIRDVIGKGGSVIRALTEETGTTIDISDDGVVTIASTSSEGMAEAKKRI. Positions 629-697 constitute an S1 motif domain; it reads GQVYEGTVLK…EKGRVRLSAK (69 aa).

This sequence belongs to the polyribonucleotide nucleotidyltransferase family. Requires Mg(2+) as cofactor.

The protein resides in the cytoplasm. It carries out the reaction RNA(n+1) + phosphate = RNA(n) + a ribonucleoside 5'-diphosphate. Functionally, involved in mRNA degradation. Catalyzes the phosphorolysis of single-stranded polyribonucleotides processively in the 3'- to 5'-direction. This is Polyribonucleotide nucleotidyltransferase from Burkholderia cenocepacia (strain HI2424).